A 189-amino-acid polypeptide reads, in one-letter code: Translation initiation factor IF-3 (189 aa).

The protein belongs to the IF-3 family. As to quaternary structure, monomer.

It is found in the cytoplasm. IF-3 binds to the 30S ribosomal subunit and shifts the equilibrium between 70S ribosomes and their 50S and 30S subunits in favor of the free subunits, thus enhancing the availability of 30S subunits on which protein synthesis initiation begins. In Corynebacterium glutamicum (strain R), this protein is Translation initiation factor IF-3.